The sequence spans 274 residues: N-acetylmuramic acid 6-phosphate etherase (274 aa).

In terms of domain architecture, SIS spans 52-215 (IIPRMEQGGR…STSIMIRLGR (164 aa)). The Proton donor role is filled by Glu80. Glu111 is a catalytic residue.

Belongs to the GCKR-like family. MurNAc-6-P etherase subfamily. Homodimer.

It carries out the reaction N-acetyl-D-muramate 6-phosphate + H2O = N-acetyl-D-glucosamine 6-phosphate + (R)-lactate. The protein operates within amino-sugar metabolism; N-acetylmuramate degradation. Functionally, specifically catalyzes the cleavage of the D-lactyl ether substituent of MurNAc 6-phosphate, producing GlcNAc 6-phosphate and D-lactate. The chain is N-acetylmuramic acid 6-phosphate etherase from Porphyromonas gingivalis (strain ATCC BAA-308 / W83).